Here is a 359-residue protein sequence, read N- to C-terminus: UDP-N-acetylglucosamine--N-acetylmuramyl-(pentapeptide) pyrophosphoryl-undecaprenol N-acetylglucosamine transferase (359 aa).

Residues 15-17 (TGG), N127, R166, S191, I245, 264-269 (ALTVSE), and Q290 each bind UDP-N-acetyl-alpha-D-glucosamine.

It belongs to the glycosyltransferase 28 family. MurG subfamily.

It is found in the cell inner membrane. The enzyme catalyses di-trans,octa-cis-undecaprenyl diphospho-N-acetyl-alpha-D-muramoyl-L-alanyl-D-glutamyl-meso-2,6-diaminopimeloyl-D-alanyl-D-alanine + UDP-N-acetyl-alpha-D-glucosamine = di-trans,octa-cis-undecaprenyl diphospho-[N-acetyl-alpha-D-glucosaminyl-(1-&gt;4)]-N-acetyl-alpha-D-muramoyl-L-alanyl-D-glutamyl-meso-2,6-diaminopimeloyl-D-alanyl-D-alanine + UDP + H(+). It participates in cell wall biogenesis; peptidoglycan biosynthesis. Functionally, cell wall formation. Catalyzes the transfer of a GlcNAc subunit on undecaprenyl-pyrophosphoryl-MurNAc-pentapeptide (lipid intermediate I) to form undecaprenyl-pyrophosphoryl-MurNAc-(pentapeptide)GlcNAc (lipid intermediate II). This chain is UDP-N-acetylglucosamine--N-acetylmuramyl-(pentapeptide) pyrophosphoryl-undecaprenol N-acetylglucosamine transferase, found in Pseudomonas putida (strain ATCC 700007 / DSM 6899 / JCM 31910 / BCRC 17059 / LMG 24140 / F1).